We begin with the raw amino-acid sequence, 238 residues long: Uridylate kinase (238 aa).

12–15 (KLSG) is a binding site for ATP. Residue glycine 54 participates in UMP binding. Positions 55 and 59 each coordinate ATP. Residues aspartate 74 and 135–142 (TGNPFFTT) each bind UMP. ATP-binding residues include threonine 162, asparagine 163, tyrosine 168, and aspartate 171.

This sequence belongs to the UMP kinase family. As to quaternary structure, homohexamer.

The protein resides in the cytoplasm. It carries out the reaction UMP + ATP = UDP + ADP. The protein operates within pyrimidine metabolism; CTP biosynthesis via de novo pathway; UDP from UMP (UMPK route): step 1/1. With respect to regulation, inhibited by UTP. In terms of biological role, catalyzes the reversible phosphorylation of UMP to UDP. The protein is Uridylate kinase of Rhodopseudomonas palustris (strain BisB18).